The sequence spans 145 residues: Lymphocyte antigen 6 complex locus protein G5c (145 aa).

The first 38 residues, 1 to 38, serve as a signal peptide directing secretion; it reads MSGLAASWSLKPLGPHGVTQALCAVLLAVLVTMNVVLG. The 91-residue stretch at 55-145 folds into the UPAR/Ly6 domain; the sequence is LHCYRCLLET…NPKNRKNTMH (91 aa). Intrachain disulfides connect C57/C84, C60/C69, C76/C102, C111/C128, and C129/C134. The N-linked (GlcNAc...) asparagine glycan is linked to N91.

In terms of assembly, forms oligomers. Post-translationally, N-glycosylated. As to expression, expression restricted to the caput of epididymis. Detected only from day 24 postnatum.

It is found in the secreted. In terms of biological role, may have a role in hematopoietic cell differentiation. The protein is Lymphocyte antigen 6 complex locus protein G5c (Ly6g5c) of Rattus norvegicus (Rat).